The chain runs to 243 residues: Probable intron-encoded endonuclease aI3 (243 aa).

Belongs to the LAGLIDADG endonuclease family.

It localises to the mitochondrion. In terms of biological role, mitochondrial DNA endonuclease involved in intron homing. This Dictyostelium citrinum (Slime mold) protein is Probable intron-encoded endonuclease aI3 (aI3).